We begin with the raw amino-acid sequence, 274 residues long: Bis(5'-nucleosyl)-tetraphosphatase, symmetrical (274 aa).

Belongs to the Ap4A hydrolase family.

The enzyme catalyses P(1),P(4)-bis(5'-adenosyl) tetraphosphate + H2O = 2 ADP + 2 H(+). In terms of biological role, hydrolyzes diadenosine 5',5'''-P1,P4-tetraphosphate to yield ADP. This chain is Bis(5'-nucleosyl)-tetraphosphatase, symmetrical, found in Shewanella sp. (strain MR-7).